A 116-amino-acid polypeptide reads, in one-letter code: Beta-2-microglobulin (116 aa).

The first 19 residues, 1–19 (MKFLLSFVVLAVFSASAFA), serve as a signal peptide directing secretion. The Ig-like C1-type domain occupies 24-111 (PKIQVYSRNP…RHLKETKNIS (88 aa)). Residues C44 and C99 are joined by a disulfide bond.

This sequence belongs to the beta-2-microglobulin family. As to quaternary structure, heterodimer of an alpha chain and a beta chain. Beta-2-microglobulin is the beta-chain of major histocompatibility complex class I molecules.

Its subcellular location is the secreted. Component of the class I major histocompatibility complex (MHC). Involved in the presentation of peptide antigens to the immune system. The protein is Beta-2-microglobulin (b2m) of Ictalurus punctatus (Channel catfish).